We begin with the raw amino-acid sequence, 2309 residues long: Collagen alpha-4(VI) chain (2309 aa).

An N-terminal signal peptide occupies residues 1 to 22 (MGTWKTFWLIISLAAGLGFVKS). The segment at 21-1410 (KSQRIVCREA…TCCNMYAKCY (1390 aa)) is nonhelical region. VWFA domains are found at residues 34 to 206 (DIVF…AQKL), 235 to 413 (DIVF…LQAL), 430 to 653 (DVVF…FQRV), 634 to 811 (DLVF…GNKL), 849 to 1018 (DIYF…IRDI), and 1030 to 1199 (DIIF…EKEI). An N-linked (GlcNAc...) asparagine glycan is attached at asparagine 188. Asparagine 754 carries N-linked (GlcNAc...) asparagine glycosylation. N-linked (GlcNAc...) asparagine glycosylation occurs at asparagine 1114. The triple-helical region stretch occupies residues 1411–1744 (GDDGIRGEPG…GKMGTKGSKG (334 aa)). A compositionally biased stretch (basic and acidic residues) spans 1414-1430 (GIRGEPGSRGEQGERGL). Residues 1414-1746 (GIRGEPGSRG…MGTKGSKGLA (333 aa)) form a disordered region. Residues 1480-1489 (GEEGVGGLDG) show a composition bias toward gly residues. The Cell attachment site motif lies at 1527 to 1529 (RGD). Composition is skewed to low complexity over residues 1605-1621 (PRGRQGPPGFFGQKGDP) and 1650-1669 (PAGERGPRGQQGPRGQPGLF). Residues 1745–2309 (LADRTPCEIV…EGECLNYVLK (565 aa)) form a nonhelical region region. VWFA domains are found at residues 1776-1957 (EVVF…ASCT) and 1982-2187 (DLVF…LNLL). Positions 2208–2210 (RGD) match the Cell attachment site motif. The tract at residues 2262–2300 (ALGSHGKDRADTEDIDQETPAKGRHLGPTHGPCPMGPEE) is disordered.

Belongs to the type VI collagen family. Trimers composed of three different chains: alpha-1(VI), alpha-2(VI), and alpha-3(VI) or alpha-4(VI) or alpha-5(VI) or alpha-6(VI). Prolines at the third position of the tripeptide repeating unit (G-X-Y) are hydroxylated in some or all of the chains. In terms of tissue distribution, in newborn, it is expressed in lung, kidney, brain, intestine, skin, sternum and, at weak level, calvaria. In adult, it is almost absent with some weak expression in ovary and very weak expression in spleen, lung, uterus and brain.

It is found in the secreted. It localises to the extracellular space. The protein localises to the extracellular matrix. In terms of biological role, collagen VI acts as a cell-binding protein. This chain is Collagen alpha-4(VI) chain (Col6a4), found in Mus musculus (Mouse).